Here is a 382-residue protein sequence, read N- to C-terminus: D-alanine--D-alanine ligase (382 aa).

Positions 161–372 (KVVFESAGLH…YAELIDELIH (212 aa)) constitute an ATP-grasp domain. 193–248 (VDRLGFPVFVKPARAGSSMGISKVDSLEGLDAAIEEARRHDLKLVIEAGIVGREIE) contacts ATP. Residues Asp326, Glu339, and Asn341 each contribute to the Mg(2+) site.

It belongs to the D-alanine--D-alanine ligase family. Requires Mg(2+) as cofactor. The cofactor is Mn(2+).

The protein resides in the cytoplasm. It carries out the reaction 2 D-alanine + ATP = D-alanyl-D-alanine + ADP + phosphate + H(+). It participates in cell wall biogenesis; peptidoglycan biosynthesis. In terms of biological role, cell wall formation. The chain is D-alanine--D-alanine ligase from Pseudarthrobacter chlorophenolicus (strain ATCC 700700 / DSM 12829 / CIP 107037 / JCM 12360 / KCTC 9906 / NCIMB 13794 / A6) (Arthrobacter chlorophenolicus).